A 134-amino-acid chain; its full sequence is Large ribosomal subunit protein eL32 (134 aa).

Belongs to the eukaryotic ribosomal protein eL32 family.

The sequence is that of Large ribosomal subunit protein eL32 (RPL32) from Tetrahymena thermophila (strain SB210).